A 239-amino-acid chain; its full sequence is Seed lectin beta chain (239 aa).

D-glucose contacts are provided by D88 and G106. Residues E126 and D128 each coordinate Mn(2+). The Ca(2+) site is built by D128, N132, and D137. 2 residues coordinate Mn(2+): D137 and H142. D-glucose is bound by residues G217 and A218.

Belongs to the leguminous lectin family. As to quaternary structure, tetramer consisting of heterodimers of alpha and beta chains.

Galactose-binding lectin. Agglutinates human erythrocytes, and requires Ca(2+) and Mn(2+) ions for full agglutinating activity. Has antifungal activity against Fusarium sp., A.niger and A.flavus. The protein is Seed lectin beta chain of Spatholobus parviflorus (Butea parviflora).